The following is a 317-amino-acid chain: Acetyl-coenzyme A carboxylase carboxyl transferase subunit alpha (317 aa).

A CoA carboxyltransferase C-terminal domain is found at 33–294; it reads NLDDEIARLQ…KQRLLEDLAD (262 aa).

It belongs to the AccA family. In terms of assembly, acetyl-CoA carboxylase is a heterohexamer composed of biotin carboxyl carrier protein (AccB), biotin carboxylase (AccC) and two subunits each of ACCase subunit alpha (AccA) and ACCase subunit beta (AccD).

It is found in the cytoplasm. It carries out the reaction N(6)-carboxybiotinyl-L-lysyl-[protein] + acetyl-CoA = N(6)-biotinyl-L-lysyl-[protein] + malonyl-CoA. Its pathway is lipid metabolism; malonyl-CoA biosynthesis; malonyl-CoA from acetyl-CoA: step 1/1. Component of the acetyl coenzyme A carboxylase (ACC) complex. First, biotin carboxylase catalyzes the carboxylation of biotin on its carrier protein (BCCP) and then the CO(2) group is transferred by the carboxyltransferase to acetyl-CoA to form malonyl-CoA. This chain is Acetyl-coenzyme A carboxylase carboxyl transferase subunit alpha, found in Glaesserella parasuis serovar 5 (strain SH0165) (Haemophilus parasuis).